The sequence spans 238 residues: MTEEVILKVGLTPKHQCSYLGHEQEQLLVLMDHSLLNASGYERLLTAGFRRSGNDIYRPHCPACNACQSLRIHSERFVPSRSQKRIRQLNQDIELVLSYDDKPEYYQLYERYIRERHHDGSMYPPSRTQYKGFLHCDWMPPLYLEMRKDNRLIGVATTDLLPHSLSAMYTFFDPAHADRSLGTFAILSQLELARRTGRSWLYLGYLVEECRKMNYKRQYLPHERLIQGEWKNIDSKPE.

Belongs to the R-transferase family. Bpt subfamily.

The protein localises to the cytoplasm. The enzyme catalyses N-terminal L-glutamyl-[protein] + L-leucyl-tRNA(Leu) = N-terminal L-leucyl-L-glutamyl-[protein] + tRNA(Leu) + H(+). It catalyses the reaction N-terminal L-aspartyl-[protein] + L-leucyl-tRNA(Leu) = N-terminal L-leucyl-L-aspartyl-[protein] + tRNA(Leu) + H(+). In terms of biological role, functions in the N-end rule pathway of protein degradation where it conjugates Leu from its aminoacyl-tRNA to the N-termini of proteins containing an N-terminal aspartate or glutamate. The polypeptide is Aspartate/glutamate leucyltransferase (Aeromonas hydrophila subsp. hydrophila (strain ATCC 7966 / DSM 30187 / BCRC 13018 / CCUG 14551 / JCM 1027 / KCTC 2358 / NCIMB 9240 / NCTC 8049)).